Consider the following 613-residue polypeptide: DNA mismatch repair protein MutL (613 aa).

This sequence belongs to the DNA mismatch repair MutL/HexB family.

Its function is as follows. This protein is involved in the repair of mismatches in DNA. It is required for dam-dependent methyl-directed DNA mismatch repair. May act as a 'molecular matchmaker', a protein that promotes the formation of a stable complex between two or more DNA-binding proteins in an ATP-dependent manner without itself being part of a final effector complex. The polypeptide is DNA mismatch repair protein MutL (Flavobacterium psychrophilum (strain ATCC 49511 / DSM 21280 / CIP 103535 / JIP02/86)).